The chain runs to 191 residues: Large ribosomal subunit protein uL22 (191 aa).

Residues 159–168 are compositionally biased toward basic and acidic residues; it reads VPKGEDDTAQ. The interval 159–191 is disordered; it reads VPKGEDDTAQKKKVSQKKLKKQKLKAALSGGAD. The segment covering 169–182 has biased composition (basic residues); it reads KKKVSQKKLKKQKL.

This sequence belongs to the universal ribosomal protein uL22 family.

This chain is Large ribosomal subunit protein uL22 (RPL17), found in Suberites domuncula (Sponge).